Reading from the N-terminus, the 277-residue chain is Putative phosphoenolpyruvate synthase regulatory protein (277 aa).

An ADP-binding site is contributed by 157–164; it reads GVSRSGKT.

It belongs to the pyruvate, phosphate/water dikinase regulatory protein family. PSRP subfamily.

The catalysed reaction is [pyruvate, water dikinase] + ADP = [pyruvate, water dikinase]-phosphate + AMP + H(+). It carries out the reaction [pyruvate, water dikinase]-phosphate + phosphate + H(+) = [pyruvate, water dikinase] + diphosphate. Bifunctional serine/threonine kinase and phosphorylase involved in the regulation of the phosphoenolpyruvate synthase (PEPS) by catalyzing its phosphorylation/dephosphorylation. This Vibrio vulnificus (strain CMCP6) protein is Putative phosphoenolpyruvate synthase regulatory protein.